The primary structure comprises 346 residues: Small ribosomal subunit biogenesis GTPase RsgA 1 (346 aa).

Residues 93-248 (AEQLIAANFD…VIDTPGMREF (156 aa)) enclose the CP-type G domain. GTP is bound by residues 138–141 (TKAD) and 190–198 (GSSGVGKSS). Positions 271, 276, 278, and 284 each coordinate Zn(2+).

This sequence belongs to the TRAFAC class YlqF/YawG GTPase family. RsgA subfamily. Monomer. Associates with 30S ribosomal subunit, binds 16S rRNA. It depends on Zn(2+) as a cofactor.

It is found in the cytoplasm. Functionally, one of several proteins that assist in the late maturation steps of the functional core of the 30S ribosomal subunit. Helps release RbfA from mature subunits. May play a role in the assembly of ribosomal proteins into the subunit. Circularly permuted GTPase that catalyzes slow GTP hydrolysis, GTPase activity is stimulated by the 30S ribosomal subunit. This chain is Small ribosomal subunit biogenesis GTPase RsgA 1, found in Listeria monocytogenes serovar 1/2a (strain ATCC BAA-679 / EGD-e).